The chain runs to 243 residues: DNA repair protein RecO (243 aa).

Belongs to the RecO family.

In terms of biological role, involved in DNA repair and RecF pathway recombination. In Thermobifida fusca (strain YX), this protein is DNA repair protein RecO.